We begin with the raw amino-acid sequence, 209 residues long: Response regulator protein VraR (209 aa).

The Response regulatory domain occupies 4–120 (KVLFVDDHEM…DIADAVRKTS (117 aa)). Aspartate 55 carries the 4-aspartylphosphate modification. One can recognise an HTH luxR-type domain in the interval 141–206 (RAELYEMLTE…QAVIYAFQHN (66 aa)). The segment at residues 165-184 (NQEIASASHITIKTVKTHVS) is a DNA-binding region (H-T-H motif).

Homodimer. Post-translationally, phosphorylated by VraS. Phosphorylation state of VraR controls dimerization of the protein.

Member of the two-component regulatory system VraS/VraR involved in the control of the cell wall peptidoglycan biosynthesis. Upon cellular stress, the histidine kinase VraS transfers the phosphoryl group onto VraR. Upon phosphorylation, VraR dimerizes at the N-terminal domain. In turn, phosphorylation-induced dimerization expand and enhance the VraR binding to its own promoter leading to increased expression and subsequent modulation of as many as 40 genes, which ultimately constitute the S.aureus response to cell wall damage. In addition, inhibits the host autophagic flux and delays the early stage of autophagosome formation, thereby promoting bacterial survival. Facilitates the ability of S.aureus to resist host polymorphonuclear leukocytes-mediated phagocytosis and killing thus contributing to immune evasion. The sequence is that of Response regulator protein VraR (vraR) from Staphylococcus aureus (strain NCTC 8325 / PS 47).